A 456-amino-acid polypeptide reads, in one-letter code: Cysteine--tRNA ligase (456 aa).

Cys-28 contributes to the Zn(2+) binding site. The 'HIGH' region motif lies at 30–40 (ITVYDHCHLGH). Residues Cys-209, His-234, and Glu-238 each coordinate Zn(2+). Positions 266 to 270 (KMAKS) match the 'KMSKS' region motif. Lys-269 contacts ATP.

This sequence belongs to the class-I aminoacyl-tRNA synthetase family. As to quaternary structure, monomer. Zn(2+) is required as a cofactor.

The protein localises to the cytoplasm. It catalyses the reaction tRNA(Cys) + L-cysteine + ATP = L-cysteinyl-tRNA(Cys) + AMP + diphosphate. This chain is Cysteine--tRNA ligase, found in Legionella pneumophila subsp. pneumophila (strain Philadelphia 1 / ATCC 33152 / DSM 7513).